We begin with the raw amino-acid sequence, 620 residues long: 1-deoxy-D-xylulose-5-phosphate synthase (620 aa).

Thiamine diphosphate is bound by residues His-80 and 121–123 (GHS). Residue Asp-152 participates in Mg(2+) binding. Residues 153 to 154 (GA), Asn-181, Tyr-288, and Glu-370 contribute to the thiamine diphosphate site. Asn-181 contacts Mg(2+).

Belongs to the transketolase family. DXPS subfamily. As to quaternary structure, homodimer. Mg(2+) is required as a cofactor. The cofactor is thiamine diphosphate.

It catalyses the reaction D-glyceraldehyde 3-phosphate + pyruvate + H(+) = 1-deoxy-D-xylulose 5-phosphate + CO2. It participates in metabolic intermediate biosynthesis; 1-deoxy-D-xylulose 5-phosphate biosynthesis; 1-deoxy-D-xylulose 5-phosphate from D-glyceraldehyde 3-phosphate and pyruvate: step 1/1. Functionally, catalyzes the acyloin condensation reaction between C atoms 2 and 3 of pyruvate and glyceraldehyde 3-phosphate to yield 1-deoxy-D-xylulose-5-phosphate (DXP). This chain is 1-deoxy-D-xylulose-5-phosphate synthase, found in Salmonella heidelberg (strain SL476).